A 124-amino-acid chain; its full sequence is MLVIFLGILGLLANQVLGLPTQAGGHLRSTDNPPQEELGYWCTYMESCKFCWECAHGICKNKVNTSMPLIIENSYLTSCEVSRWYNQCTYSEGNGHYHVMDCSDPVPHNRPHQLLRKIYEKEDL.

An N-terminal signal peptide occupies residues 1–18 (MLVIFLGILGLLANQVLG). N64 carries an N-linked (GlcNAc...) asparagine; by host glycan. Residues 121–124 (KEDL) carry the Prevents secretion from ER motif.

It belongs to the asfivirus MGF 110 family.

It is found in the virion. The protein resides in the host endoplasmic reticulum-Golgi intermediate compartment. Causes the redistribution of lumenal ER protein to an enlarged ERGIC compartment. This chain is Protein MGF 110-4L, found in Ornithodoros (relapsing fever ticks).